The primary structure comprises 235 residues: Segregation and condensation protein A (235 aa).

This sequence belongs to the ScpA family. Component of a cohesin-like complex composed of ScpA, ScpB and the Smc homodimer, in which ScpA and ScpB bind to the head domain of Smc. The presence of the three proteins is required for the association of the complex with DNA.

The protein localises to the cytoplasm. Its function is as follows. Participates in chromosomal partition during cell division. May act via the formation of a condensin-like complex containing Smc and ScpB that pull DNA away from mid-cell into both cell halves. The sequence is that of Segregation and condensation protein A from Streptococcus equi subsp. equi (strain 4047).